Here is a 188-residue protein sequence, read N- to C-terminus: Probable manganese efflux pump MntP (188 aa).

The next 5 membrane-spanning stretches (helical) occupy residues 3 to 23 (ITATVLLAFGMSMDAFAASIG), 66 to 86 (LEWNHWIAFVLLIFLGGRMII), 106 to 128 (WLLVTTAIATSLDAMAVGVGLAF), 143 to 163 (ATLIMSTLGMMVGRFIGSIIG), and 168 to 188 (ILGGLVLIGIGVQILWTHFHG).

It belongs to the MntP (TC 9.B.29) family.

The protein resides in the cell inner membrane. Functionally, probably functions as a manganese efflux pump. In Escherichia coli O7:K1 (strain IAI39 / ExPEC), this protein is Probable manganese efflux pump MntP.